A 694-amino-acid chain; its full sequence is Elongation factor G (694 aa).

Residues 9–288 enclose the tr-type G domain; the sequence is DAIRNIGIMA…VIVKWLPSPL (280 aa). GTP is bound by residues 18 to 25, 82 to 86, and 136 to 139; these read AHIDAGKT, DTPGH, and NKMD.

This sequence belongs to the TRAFAC class translation factor GTPase superfamily. Classic translation factor GTPase family. EF-G/EF-2 subfamily.

It is found in the cytoplasm. Functionally, catalyzes the GTP-dependent ribosomal translocation step during translation elongation. During this step, the ribosome changes from the pre-translocational (PRE) to the post-translocational (POST) state as the newly formed A-site-bound peptidyl-tRNA and P-site-bound deacylated tRNA move to the P and E sites, respectively. Catalyzes the coordinated movement of the two tRNA molecules, the mRNA and conformational changes in the ribosome. The polypeptide is Elongation factor G (Chlamydia trachomatis serovar L2 (strain ATCC VR-902B / DSM 19102 / 434/Bu)).